A 107-amino-acid polypeptide reads, in one-letter code: Large ribosomal subunit protein eL33 (107 aa).

The protein belongs to the eukaryotic ribosomal protein eL33 family. Component of the large ribosomal subunit. Mature ribosomes consist of a small (40S) and a large (60S) subunit. The 40S subunit contains about 32 different proteins and 1 molecule of RNA (18S). The 60S subunit contains 45 different proteins and 3 molecules of RNA (25S, 5.8S and 5S).

The protein localises to the cytoplasm. Functionally, component of the ribosome, a large ribonucleoprotein complex responsible for the synthesis of proteins in the cell. The small ribosomal subunit (SSU) binds messenger RNAs (mRNAs) and translates the encoded message by selecting cognate aminoacyl-transfer RNA (tRNA) molecules. The large subunit (LSU) contains the ribosomal catalytic site termed the peptidyl transferase center (PTC), which catalyzes the formation of peptide bonds, thereby polymerizing the amino acids delivered by tRNAs into a polypeptide chain. The nascent polypeptides leave the ribosome through a tunnel in the LSU and interact with protein factors that function in enzymatic processing, targeting, and the membrane insertion of nascent chains at the exit of the ribosomal tunnel. This is Large ribosomal subunit protein eL33 from Candida albicans (strain SC5314 / ATCC MYA-2876) (Yeast).